A 240-amino-acid chain; its full sequence is Uridylate kinase (240 aa).

Residue 13 to 16 (KASG) participates in ATP binding. The involved in allosteric activation by GTP stretch occupies residues 21-26 (GSQGFG). Residue G55 participates in UMP binding. 2 residues coordinate ATP: G56 and R60. Residues D75 and 136–143 (TGNPFFTT) each bind UMP. Positions 163, 164, 169, and 172 each coordinate ATP.

This sequence belongs to the UMP kinase family. In terms of assembly, homohexamer.

The protein localises to the cytoplasm. The catalysed reaction is UMP + ATP = UDP + ADP. The protein operates within pyrimidine metabolism; CTP biosynthesis via de novo pathway; UDP from UMP (UMPK route): step 1/1. With respect to regulation, allosterically activated by GTP. Inhibited by UTP. Catalyzes the reversible phosphorylation of UMP to UDP. The polypeptide is Uridylate kinase (Sinorhizobium medicae (strain WSM419) (Ensifer medicae)).